A 103-amino-acid polypeptide reads, in one-letter code: Large ribosomal subunit protein bL21 (103 aa).

This sequence belongs to the bacterial ribosomal protein bL21 family. As to quaternary structure, part of the 50S ribosomal subunit. Contacts protein L20.

In terms of biological role, this protein binds to 23S rRNA in the presence of protein L20. In Psychrobacter arcticus (strain DSM 17307 / VKM B-2377 / 273-4), this protein is Large ribosomal subunit protein bL21.